The primary structure comprises 317 residues: Pyridoxal 5'-phosphate synthase subunit PdxS (317 aa).

Asp-47 contributes to the D-ribose 5-phosphate binding site. Lys-104 acts as the Schiff-base intermediate with D-ribose 5-phosphate in catalysis. D-ribose 5-phosphate is bound at residue Gly-176. Position 188 (Arg-188) interacts with D-glyceraldehyde 3-phosphate. Residues Gly-237 and 258–259 each bind D-ribose 5-phosphate; that span reads GS.

It belongs to the PdxS/SNZ family. In terms of assembly, in the presence of PdxT, forms a dodecamer of heterodimers.

The catalysed reaction is aldehydo-D-ribose 5-phosphate + D-glyceraldehyde 3-phosphate + L-glutamine = pyridoxal 5'-phosphate + L-glutamate + phosphate + 3 H2O + H(+). It functions in the pathway cofactor biosynthesis; pyridoxal 5'-phosphate biosynthesis. In terms of biological role, catalyzes the formation of pyridoxal 5'-phosphate from ribose 5-phosphate (RBP), glyceraldehyde 3-phosphate (G3P) and ammonia. The ammonia is provided by the PdxT subunit. Can also use ribulose 5-phosphate and dihydroxyacetone phosphate as substrates, resulting from enzyme-catalyzed isomerization of RBP and G3P, respectively. The protein is Pyridoxal 5'-phosphate synthase subunit PdxS of Corynebacterium glutamicum (strain ATCC 13032 / DSM 20300 / JCM 1318 / BCRC 11384 / CCUG 27702 / LMG 3730 / NBRC 12168 / NCIMB 10025 / NRRL B-2784 / 534).